Consider the following 123-residue polypeptide: MSIIGVGIDVAEIDRFRASLERTPGLADRLFLERELLLPNGERRGIASLAARFAAKEAVAKALGAPGGLYWTDAEVWVEDSGRPRLRVTGTVAARAAELGVQSWHVSLSHDAGVASAVVVAEG.

Mg(2+) is bound by residues D9 and E57.

It belongs to the P-Pant transferase superfamily. AcpS family. The cofactor is Mg(2+).

It localises to the cytoplasm. The enzyme catalyses apo-[ACP] + CoA = holo-[ACP] + adenosine 3',5'-bisphosphate + H(+). Functionally, transfers the 4'-phosphopantetheine moiety from coenzyme A to a Ser of acyl-carrier-protein. In Streptomyces avermitilis (strain ATCC 31267 / DSM 46492 / JCM 5070 / NBRC 14893 / NCIMB 12804 / NRRL 8165 / MA-4680), this protein is Holo-[acyl-carrier-protein] synthase.